A 121-amino-acid polypeptide reads, in one-letter code: Flagellar protein FliT (121 aa).

The interval 1 to 50 (MNHAPHLYFAWQQLVEKSQLMLRLATEEQWDELIASEMAYVNAVQEIAHL) is required for homodimerization. Positions 60 to 98 (MQEQLRPMLRLILDNESKVKQLLQIRMDELAKLVGQSSV) are fliD binding.

The protein belongs to the FliT family. In terms of assembly, homodimer. Interacts with FliD and FlhC.

It localises to the cytoplasm. The protein localises to the cytosol. In terms of biological role, dual-function protein that regulates the transcription of class 2 flagellar operons and that also acts as an export chaperone for the filament-capping protein FliD. As a transcriptional regulator, acts as an anti-FlhDC factor; it directly binds FlhC, thus inhibiting the binding of the FlhC/FlhD complex to class 2 promoters, resulting in decreased expression of class 2 flagellar operons. As a chaperone, effects FliD transition to the membrane by preventing its premature polymerization, and by directing it to the export apparatus. The protein is Flagellar protein FliT of Escherichia coli O139:H28 (strain E24377A / ETEC).